The sequence spans 552 residues: Capsid protein precursor (552 aa).

The tract at residues 1–41 (MKQNDTKKTTQRRNSKKYSSKTNRGTKRAPRDQEVGTGAQE) is disordered. Residues 9 to 28 (TTQRRNSKKYSSKTNRGTKR) are compositionally biased toward basic residues.

In terms of assembly, homodimer. In terms of processing, the 7 kDa polypeptide is acetylated. Post-translationally, autocatalytic proteolysis releases a post-translationally modified peptide that remains associated with nucleic acid within the virion. This peptide is observed only when nucleic acid is packaged in the capsid.

Its subcellular location is the virion. The capsid protein self-assembles to form an icosahedral capsid with a T=2 symmetry made of 120 subunits. In Human picobirnavirus (strain Human/Thailand/Hy005102/-) (PBV), this protein is Capsid protein precursor (Segment-1).